The primary structure comprises 179 residues: Large ribosomal subunit protein uL5 (179 aa).

The protein belongs to the universal ribosomal protein uL5 family. Part of the 50S ribosomal subunit; part of the 5S rRNA/L5/L18/L25 subcomplex. Contacts the 5S rRNA and the P site tRNA. Forms a bridge to the 30S subunit in the 70S ribosome.

Functionally, this is one of the proteins that bind and probably mediate the attachment of the 5S RNA into the large ribosomal subunit, where it forms part of the central protuberance. In the 70S ribosome it contacts protein S13 of the 30S subunit (bridge B1b), connecting the 2 subunits; this bridge is implicated in subunit movement. Contacts the P site tRNA; the 5S rRNA and some of its associated proteins might help stabilize positioning of ribosome-bound tRNAs. This chain is Large ribosomal subunit protein uL5, found in Ruthia magnifica subsp. Calyptogena magnifica.